Reading from the N-terminus, the 235-residue chain is Uridylate kinase (235 aa).

K8 to G11 is an ATP binding site. Residues G16–G21 are involved in allosteric activation by GTP. Position 50 (G50) interacts with UMP. Residues G51 and R55 each contribute to the ATP site. UMP is bound by residues D71 and T132–T139. Positions 159, 165, and 168 each coordinate ATP.

Belongs to the UMP kinase family. As to quaternary structure, homohexamer.

It is found in the cytoplasm. The catalysed reaction is UMP + ATP = UDP + ADP. The protein operates within pyrimidine metabolism; CTP biosynthesis via de novo pathway; UDP from UMP (UMPK route): step 1/1. Its activity is regulated as follows. Allosterically activated by GTP. Inhibited by UTP. In terms of biological role, catalyzes the reversible phosphorylation of UMP to UDP. The sequence is that of Uridylate kinase from Sulfurovum sp. (strain NBC37-1).